Here is a 473-residue protein sequence, read N- to C-terminus: MASEVSVASSGSEHSGAQKCPFQDPGLSSMDQDSRLRDILSRFNREKIPERAVHARGAGAYGEFEVTHDVSDICDIDMLLGVGKKTPCVVRFSTTTLERGSAESVRDVKGMAIKHFTQDGNWDWVCLNIPMFFIRDPSKFPDMVHAQRPDPTTNVANPSRWWEFVCNNHETLHMVMFQFSDFGTMFDYRSMSGYAAHAYKWVMPDGSWKYVHWFLASDQGPNFETGHQAKQIGADDAESATRDLYQSLERGEYPSWTVKVQVVDPEDAPKLPFNILDVTKHWNLGNYPPDIDVIPGRTLGKLTLKKGPQDYFEEIEQLAFSPSRLVHGVEASEDPMLQARLFAYPDAQKHRLGPNNLDLPANRTKKLADGSRPEKAEMAPQKVPSQEHADWVSQVKSSSWSEPNETDYKFPREFWKALPRLRGEAFQNSLVVNMAKSVSQVPADMRQKVYSTLALIADDLADRVRTMTEEIVE.

The span at 1 to 15 (MASEVSVASSGSEHS) shows a compositional bias: low complexity. Residues 1–31 (MASEVSVASSGSEHSGAQKCPFQDPGLSSMD) form a disordered region. Residue histidine 54 is part of the active site. Tyrosine 344 lines the heme pocket. Residues 352 to 389 (LGPNNLDLPANRTKKLADGSRPEKAEMAPQKVPSQEHA) are disordered. The span at 366–377 (KLADGSRPEKAE) shows a compositional bias: basic and acidic residues.

This sequence belongs to the catalase family. Requires heme as cofactor.

The protein operates within alkaloid biosynthesis; ergot alkaloid biosynthesis. Functionally, catalase; part of the gene cluster that mediates the biosynthesis of fungal ergot alkaloid. DmaW catalyzes the first step of ergot alkaloid biosynthesis by condensing dimethylallyl diphosphate (DMAP) and tryptophan to form 4-dimethylallyl-L-tryptophan. The second step is catalyzed by the methyltransferase easF that methylates 4-dimethylallyl-L-tryptophan in the presence of S-adenosyl-L-methionine, resulting in the formation of 4-dimethylallyl-L-abrine. The catalase easC and the FAD-dependent oxidoreductase easE then transform 4-dimethylallyl-L-abrine to chanoclavine-I which is further oxidized by easD in the presence of NAD(+), resulting in the formation of chanoclavine-I aldehyde. Agroclavine dehydrogenase easG then mediates the conversion of chanoclavine-I aldehyde to agroclavine via a non-enzymatic adduct reaction: the substrate is an iminium intermediate that is formed spontaneously from chanoclavine-I aldehyde in the presence of glutathione. The presence of easA is not required to complete this reaction. Further conversion of agroclavine to paspalic acid is a two-step process involving oxidation of agroclavine to elymoclavine and of elymoclavine to paspalic acid, the second step being performed by the elymoclavine oxidase cloA. Paspalic acid is then further converted to D-lysergic acid. Ergopeptines are assembled from D-lysergic acid and three different amino acids by the D-lysergyl-peptide-synthetases composed each of a monomudular and a trimodular nonribosomal peptide synthetase subunit. LpsB and lpsC encode the monomodular subunits responsible for D-lysergic acid activation and incorporation into the ergopeptine backbone. LpsA1 and A2 subunits encode the trimodular nonribosomal peptide synthetase assembling the tripeptide portion of ergopeptines. LpsA1 is responsible for formation of the major ergopeptine, ergotamine, and lpsA2 for alpha-ergocryptine, the minor ergopeptine of the total alkaloid mixture elaborated by C.purpurea. D-lysergyl-tripeptides are assembled by the nonribosomal peptide synthetases and released as N-(D-lysergyl-aminoacyl)-lactams. Cyclolization of the D-lysergyl-tripeptides is performed by the Fe(2+)/2-ketoglutarate-dependent dioxygenase easH which introduces a hydroxyl group into N-(D-lysergyl-aminoacyl)-lactam at alpha-C of the aminoacyl residue followed by spontaneous condensation with the terminal lactam carbonyl group. In Claviceps purpurea (strain 20.1) (Ergot fungus), this protein is Catalase easC.